Here is a 95-residue protein sequence, read N- to C-terminus: Cell division topological specificity factor (95 aa).

Belongs to the MinE family.

In terms of biological role, prevents the cell division inhibition by proteins MinC and MinD at internal division sites while permitting inhibition at polar sites. This ensures cell division at the proper site by restricting the formation of a division septum at the midpoint of the long axis of the cell. In Methylorubrum extorquens (strain PA1) (Methylobacterium extorquens), this protein is Cell division topological specificity factor.